The following is a 607-amino-acid chain: Fatty acid amide hydrolase (607 aa).

Catalysis depends on charge relay system residues Lys-205 and Ser-281. Gly-302 to Ser-305 serves as a coordination point for substrate. Residue Ser-305 is the Acyl-ester intermediate of the active site.

It belongs to the amidase family. As to quaternary structure, forms homodimers. In terms of tissue distribution, expressed in roots, leaves and flowers. Expressed in seedlings, flowers, roots, siliques, seeds and leaves.

The protein localises to the endoplasmic reticulum membrane. It is found in the cell membrane. It catalyses the reaction N-(5Z,8Z,11Z,14Z-eicosatetraenoyl)-ethanolamine + H2O = ethanolamine + (5Z,8Z,11Z,14Z)-eicosatetraenoate. The enzyme catalyses N-(9Z,12Z-octadecadienoyl)-ethanolamine + H2O = ethanolamine + (9Z,12Z)-octadecadienoate. The catalysed reaction is N-hexadecanoylethanolamine + H2O = ethanolamine + hexadecanoate. It carries out the reaction N-tetradecanoylethanolamine + H2O = tetradecanoate + ethanolamine. It catalyses the reaction N-dodecanoylethanolamine + H2O = dodecanoate + ethanolamine. Inhibited by methyl arachidonyl fluorophosphonate (MAFP). In terms of biological role, catalyzes the hydrolysis of bioactive endogenous fatty acid amides to their corresponding acids. The hydrolysis of endogenous amidated lipids terminates their participation as lipid mediators in various signaling systems. Converts a wide range of N-acylethanolamines (NAEs) to their corresponding free fatty acids and ethanolamine. Can use oleamide as substrate, but not indole-3-acetamide, 1-naphtalene-acetamide, nicotinic acid amide or L-asparagine. Can use 2-arachidonylglycerol as substrate. Participates in the regulation of plant growth. Hydrolyzes N-dodecanoylethanolamine, which is has a growth inhibitory effect on seedling growth. Involved in plant defense signaling. Involved in abscisic acid (ABA) signaling through mechanisms that are independent of the catalytic activity. Involved in the regulation of flowering time. Catalyzes the hydrolysis of N-acyl L-homoserine lactones (AHLs), which are a class of signaling molecules produced by bacteria for quorum sensing. Accumulation of L-homoserine appears to encourage plant growth at low concentrations by stimulating transpiration, but higher concentrations inhibit growth by stimulating ethylene production. This Arabidopsis thaliana (Mouse-ear cress) protein is Fatty acid amide hydrolase.